Consider the following 416-residue polypeptide: Glutamyl-tRNA reductase (416 aa).

Substrate-binding positions include 49-52 (TCNR), Ser-105, 110-112 (EPQ), and Gln-116. Cys-50 acts as the Nucleophile in catalysis. 185 to 190 (GAGETI) lines the NADP(+) pocket.

It belongs to the glutamyl-tRNA reductase family. Homodimer.

It catalyses the reaction (S)-4-amino-5-oxopentanoate + tRNA(Glu) + NADP(+) = L-glutamyl-tRNA(Glu) + NADPH + H(+). Its pathway is porphyrin-containing compound metabolism; protoporphyrin-IX biosynthesis; 5-aminolevulinate from L-glutamyl-tRNA(Glu): step 1/2. Functionally, catalyzes the NADPH-dependent reduction of glutamyl-tRNA(Glu) to glutamate 1-semialdehyde (GSA). The protein is Glutamyl-tRNA reductase of Shewanella loihica (strain ATCC BAA-1088 / PV-4).